The sequence spans 49 residues: Venom peptide 3 (49 aa).

Positions 1 to 23 (MRFTFVLVIAATVAVLGFFGINA) are cleaved as a signal peptide. AXPX repeat units follow at residues 23–26 (AEPM) and 31–34 (AEPY). Positions 24-37 (EPMPDPHAEPYPDA) are excised as a propeptide. Leucine amide is present on L48.

As to expression, expressed by the venom gland.

It localises to the secreted. In Eumenes pomiformis (Potter wasp), this protein is Venom peptide 3.